We begin with the raw amino-acid sequence, 1438 residues long: DNA polymerase III PolC-type (1438 aa).

The region spanning 422-578 (YVVFDVETTG…YDTEATAYMF (157 aa)) is the Exonuclease domain.

This sequence belongs to the DNA polymerase type-C family. PolC subfamily.

It localises to the cytoplasm. The catalysed reaction is DNA(n) + a 2'-deoxyribonucleoside 5'-triphosphate = DNA(n+1) + diphosphate. Functionally, required for replicative DNA synthesis. This DNA polymerase also exhibits 3' to 5' exonuclease activity. The sequence is that of DNA polymerase III PolC-type from Staphylococcus saprophyticus subsp. saprophyticus (strain ATCC 15305 / DSM 20229 / NCIMB 8711 / NCTC 7292 / S-41).